The chain runs to 557 residues: Probable protein kinase UbiB (557 aa).

Residues 121–509 (AFDTTPLASA…RKLQTRVVTA (389 aa)) enclose the Protein kinase domain. Residues 127 to 135 (LASASIAQV) and lysine 154 contribute to the ATP site. The active-site Proton acceptor is the aspartate 289. 2 helical membrane-spanning segments follow: residues 506–526 (VVTA…YGLH) and 535–555 (VPVW…IAWL).

It belongs to the ABC1 family. UbiB subfamily.

The protein resides in the cell inner membrane. It functions in the pathway cofactor biosynthesis; ubiquinone biosynthesis [regulation]. Its function is as follows. Is probably a protein kinase regulator of UbiI activity which is involved in aerobic coenzyme Q (ubiquinone) biosynthesis. The chain is Probable protein kinase UbiB from Xanthomonas campestris pv. campestris (strain B100).